Here is a 393-residue protein sequence, read N- to C-terminus: Sulfite oxidase (393 aa).

A disordered region spans residues 1 to 27; sequence MPGIRGPSEYSQEPPRHPSLKVNAKEP. A moco domain region spans residues 10 to 242; that stretch reads YSQEPPRHPS…QGFFMQKDYK (233 aa). Mo-molybdopterin contacts are provided by residues 49-53, Cys98, 159-161, His202, Arg207, and 218-220; these read YKRNH, SVD, and SVK. The tract at residues 243–393 is homodimerization; the sequence is MFPPSVNWDN…VLLRLGHSNL (151 aa). The Microbody targeting signal signature appears at 391 to 393; the sequence is SNL.

In terms of assembly, predominantly monomer; also homodimer. It depends on Mo-molybdopterin as a cofactor.

The protein localises to the peroxisome. It carries out the reaction sulfite + O2 + H2O = sulfate + H2O2. The protein operates within energy metabolism; sulfur metabolism. Its function is as follows. Probably involved in sulfite oxidative detoxification. This Arabidopsis thaliana (Mouse-ear cress) protein is Sulfite oxidase (SOX).